The sequence spans 459 residues: Putative metabolite transport protein YdjK (459 aa).

Residues 1-25 (MEQITKPHCGARLDRLPDCRWHSSM) lie on the Cytoplasmic side of the membrane. The helical transmembrane segment at 26–46 (FAIVAFGLLVCWSNAVGGLIL) threads the bilayer. At 47–60 (AQLKALGWTDNSTT) the chain is on the periplasmic side. The helical transmembrane segment at 61-81 (ATFSAITTAGMFLGALVGGII) threads the bilayer. Residues 82 to 90 (GDKTGRRNA) lie on the Cytoplasmic side of the membrane. The chain crosses the membrane as a helical span at residues 91-111 (FILYEAIHIASMVVGAFSPNM). A topological domain (periplasmic) is located at residue Asp-112. Residues 113-133 (FLIACRFVMGVGLGALLVTLF) form a helical membrane-spanning segment. The Cytoplasmic portion of the chain corresponds to 134-153 (AGFTEYMPGRNRGTWSSRVS). The chain crosses the membrane as a helical span at residues 154 to 174 (FIGNWSYPLCSLIAMGLTPLI). At 175-181 (SAEWNWR) the chain is on the periplasmic side. Residues 182–202 (VQLLIPAILSLIATALAWRYF) form a helical membrane-spanning segment. At 203–271 (PESPRWLESR…LLKRVILGSC (69 aa)) the chain is on the cytoplasmic side. A helical transmembrane segment spans residues 272–292 (VLIAMNVVQYTLINWLPTIFM). Residues 293–301 (TQGINLKDS) are Periplasmic-facing. The chain crosses the membrane as a helical span at residues 302 to 322 (IVLNTMSMFGAPFGIFIAMLV). Residues 323–329 (MDKIPRK) are Cytoplasmic-facing. Residues 330–350 (TMGVGLLILIAVLGYIYSLQT) form a helical membrane-spanning segment. Residue Ser-351 is a topological domain, periplasmic. The chain crosses the membrane as a helical span at residues 352 to 372 (MLLITLIGFFLITFVYMYVCY). Residues 373 to 399 (ASAVYVPEIWPTEAKLRGSGLANAVGR) are Cytoplasmic-facing. 2 helical membrane passes run 400–420 (ISGI…GVTG) and 421–441 (VFIL…TIGI). Residues 442-459 (ETKGVSVESLSIDAVANK) lie on the Cytoplasmic side of the membrane.

The protein belongs to the major facilitator superfamily. Sugar transporter (TC 2.A.1.1) family.

Its subcellular location is the cell inner membrane. This chain is Putative metabolite transport protein YdjK (ydjK), found in Escherichia coli (strain K12).